A 265-amino-acid chain; its full sequence is Methylthioribulose-1-phosphate dehydratase (265 aa).

Residue C118 coordinates substrate. Residues H136 and H138 each contribute to the Zn(2+) site. The Proton donor/acceptor role is filled by E161. Residue H226 participates in Zn(2+) binding.

The protein belongs to the aldolase class II family. MtnB subfamily. Requires Zn(2+) as cofactor.

Its subcellular location is the cytoplasm. It carries out the reaction 5-(methylsulfanyl)-D-ribulose 1-phosphate = 5-methylsulfanyl-2,3-dioxopentyl phosphate + H2O. The protein operates within amino-acid biosynthesis; L-methionine biosynthesis via salvage pathway; L-methionine from S-methyl-5-thio-alpha-D-ribose 1-phosphate: step 2/6. In terms of biological role, catalyzes the dehydration of methylthioribulose-1-phosphate (MTRu-1-P) into 2,3-diketo-5-methylthiopentyl-1-phosphate (DK-MTP-1-P). The polypeptide is Methylthioribulose-1-phosphate dehydratase (Scheffersomyces stipitis (strain ATCC 58785 / CBS 6054 / NBRC 10063 / NRRL Y-11545) (Yeast)).